The primary structure comprises 508 residues: Photosystem II CP47 reaction center protein (508 aa).

Transmembrane regions (helical) follow at residues Ala21–Ser36, Ile101–Trp115, Gly140–Phe156, Ile203–Ser218, Val237–Val252, and Cys457–Arg472.

Belongs to the PsbB/PsbC family. PsbB subfamily. PSII is composed of 1 copy each of membrane proteins PsbA, PsbB, PsbC, PsbD, PsbE, PsbF, PsbH, PsbI, PsbJ, PsbK, PsbL, PsbM, PsbT, PsbX, PsbY, PsbZ, Psb30/Ycf12, at least 3 peripheral proteins of the oxygen-evolving complex and a large number of cofactors. It forms dimeric complexes. Binds multiple chlorophylls. PSII binds additional chlorophylls, carotenoids and specific lipids. is required as a cofactor.

It is found in the plastid. Its subcellular location is the chloroplast thylakoid membrane. Its function is as follows. One of the components of the core complex of photosystem II (PSII). It binds chlorophyll and helps catalyze the primary light-induced photochemical processes of PSII. PSII is a light-driven water:plastoquinone oxidoreductase, using light energy to abstract electrons from H(2)O, generating O(2) and a proton gradient subsequently used for ATP formation. This is Photosystem II CP47 reaction center protein from Zygnema circumcarinatum (Green alga).